Here is a 144-residue protein sequence, read N- to C-terminus: Mercuric transport protein MerC (144 aa).

Residues 1–21 (MSAITRIIDKIGIVGTIVGSF) are Cytoplasmic-facing. A helical membrane pass occupies residues 22-42 (SCAMCFPAAASLGAAIGLGFL). Hg(2+)-binding residues include Cys-23 and Cys-26. Topologically, residues 43-46 (SQWE) are periplasmic. A helical transmembrane segment spans residues 47-67 (GLFVQWLIPIFASVALLATLA). The Cytoplasmic segment spans residues 68 to 78 (GWFSHRQWQRT). A helical transmembrane segment spans residues 79 to 99 (LLGSIGPVLALVGVFGLTHHF). Residues 100–103 (LDKD) lie on the Periplasmic side of the membrane. Residues 104-124 (LARVIFYTGLVVMFLVSIWDM) form a helical membrane-spanning segment. Residues 125–144 (VNPANRRCATDGCETPAPRS) lie on the Cytoplasmic side of the membrane.

Monomer.

The protein localises to the cell inner membrane. With respect to regulation, inhibited by the thiol-modifying reagent N-ethylmaleimide (NEM). Involved in mercuric ion uptake. This chain is Mercuric transport protein MerC, found in Acidithiobacillus ferrooxidans (Thiobacillus ferrooxidans).